The primary structure comprises 465 residues: Ribulose bisphosphate carboxylase large chain (465 aa).

Position 4 is an N6,N6,N6-trimethyllysine (K4). Substrate contacts are provided by N113 and T163. Catalysis depends on K165, which acts as the Proton acceptor. K167 contributes to the substrate binding site. K191, D193, and E194 together coordinate Mg(2+). The residue at position 191 (K191) is an N6-carboxylysine. The Proton acceptor role is filled by H284. 3 residues coordinate substrate: R285, H317, and S369.

Belongs to the RuBisCO large chain family. Type I subfamily. In terms of assembly, heterohexadecamer of 8 large chains and 8 small chains; disulfide-linked. The disulfide link is formed within the large subunit homodimers. Mg(2+) is required as a cofactor. The disulfide bond which can form in the large chain dimeric partners within the hexadecamer appears to be associated with oxidative stress and protein turnover.

The protein localises to the plastid. The protein resides in the chloroplast. The enzyme catalyses 2 (2R)-3-phosphoglycerate + 2 H(+) = D-ribulose 1,5-bisphosphate + CO2 + H2O. It catalyses the reaction D-ribulose 1,5-bisphosphate + O2 = 2-phosphoglycolate + (2R)-3-phosphoglycerate + 2 H(+). RuBisCO catalyzes two reactions: the carboxylation of D-ribulose 1,5-bisphosphate, the primary event in carbon dioxide fixation, as well as the oxidative fragmentation of the pentose substrate in the photorespiration process. Both reactions occur simultaneously and in competition at the same active site. The protein is Ribulose bisphosphate carboxylase large chain of Hamamelis mollis (Chinese witch hazel).